A 173-amino-acid polypeptide reads, in one-letter code: Large ribosomal subunit protein uL10 (173 aa).

Belongs to the universal ribosomal protein uL10 family. In terms of assembly, part of the ribosomal stalk of the 50S ribosomal subunit. The N-terminus interacts with L11 and the large rRNA to form the base of the stalk. The C-terminus forms an elongated spine to which L12 dimers bind in a sequential fashion forming a multimeric L10(L12)X complex.

Functionally, forms part of the ribosomal stalk, playing a central role in the interaction of the ribosome with GTP-bound translation factors. The protein is Large ribosomal subunit protein uL10 of Bifidobacterium adolescentis (strain ATCC 15703 / DSM 20083 / NCTC 11814 / E194a).